The primary structure comprises 162 residues: Shikimate kinase (162 aa).

10-15 contacts ATP; it reads GAGKST. Residue Ser14 participates in Mg(2+) binding. Residues Asp28, Arg52, and Gly73 each coordinate substrate. Arg113 contributes to the ATP binding site. Arg129 contacts substrate.

Belongs to the shikimate kinase family. In terms of assembly, monomer. Mg(2+) serves as cofactor.

It localises to the cytoplasm. The enzyme catalyses shikimate + ATP = 3-phosphoshikimate + ADP + H(+). Its pathway is metabolic intermediate biosynthesis; chorismate biosynthesis; chorismate from D-erythrose 4-phosphate and phosphoenolpyruvate: step 5/7. Catalyzes the specific phosphorylation of the 3-hydroxyl group of shikimic acid using ATP as a cosubstrate. The sequence is that of Shikimate kinase from Lactococcus lactis subsp. lactis (strain IL1403) (Streptococcus lactis).